Here is a 337-residue protein sequence, read N- to C-terminus: SAGA complex subunit SPT3 (337 aa).

The segment at 92-131 is disordered; sequence KDQDASAGVASGTGNPGAGGEDDLKKAGGGEKDEKDGGNM. Residues 113–128 are compositionally biased toward basic and acidic residues; sequence DDLKKAGGGEKDEKDG. A Phosphoserine modification is found at S270.

This sequence belongs to the SPT3 family. In terms of assembly, component of the 1.8 MDa SAGA (Spt-Ada-Gcn5 acetyltransferase) complex, which is composed of 19 subunits TRA1, SPT7, TAF5, NGG1/ADA3, SGF73, SPT20/ADA5, SPT8, TAF12, TAF6, HFI1/ADA1, UBP8, GCN5, ADA2, SPT3, SGF29, TAF10, TAF9, SGF11 and SUS1. The SAGA complex is composed of 4 modules, namely the HAT (histone acetyltransferase) module (GCN5, ADA2, NGG1/ADA3 and SGF29), the DUB (deubiquitinating) module (UBP8, SGF11, SGF73 and SUS1), the core or TAF (TBP-associated factor) module (TAF5, TAF6, TAF9, TAF10 and TAF12), and the Tra1 or SPT (Suppressor of Ty) module (TRA1, HFI1/ADA1, SPT3, SPT7, SPT8 and SPT20/ADA5). The Tra1/SPT module binds activators, the core module recruits TBP (TATA-binding protein), the HAT module contains the histone H3 acetyltransferase GCN5, and the DUB module comprises the histone H2B deubiquitinase UBP8. Also identified in an altered form of SAGA, named SALSA (SAGA altered, Spt8 absent) or SLIK (SAGA-like) complex, which contains a C-terminal truncated form of SPT7 and is missing SPT8. However, it has been shown that the SAGA and SAGA-like SALSA/SLIK transcriptional coactivators are structurally and biochemically equivalent.

The protein resides in the nucleus. It is found in the cytoplasm. In terms of biological role, component of the transcription coactivator SAGA complex. SAGA acts as a general cofactor required for essentially all RNA polymerase II transcription. At the promoters, SAGA is required for transcription pre-initiation complex (PIC) recruitment. It influences RNA polymerase II transcriptional activity through different activities such as TBP interaction (via core/TAF module) and promoter selectivity, interaction with transcription activators (via Tra1/SPT module), and chromatin modification through histone acetylation (via HAT module) and deubiquitination (via DUB module). SAGA preferentially acetylates histones H3 (to form H3K9ac, H3K14ac, H3K18ac and H3K23ac) and H2B and deubiquitinates histone H2B. SAGA interacts with DNA via upstream activating sequences (UASs). Also identified in a modified version of SAGA named SALSA or SLIK. The cleavage of SPT7 and the absence of the SPT8 subunit in SLIK neither drive any major conformational differences in its structure compared with SAGA, nor significantly affect HAT, DUB, or DNA-binding activities. SPT3 is required for recruitment of TATA-binding protein (TBP) to SAGA-dependent promoters. During SAGA-mediated transcriptional inhibition, SPT3 and SPT8 prevent binding of TBP to the TATA box. Required for diploid filamentous growth and haploid invasive growth. This is SAGA complex subunit SPT3 (SPT3) from Saccharomyces cerevisiae (strain ATCC 204508 / S288c) (Baker's yeast).